A 163-amino-acid polypeptide reads, in one-letter code: Nucleotide-binding protein Asuc_2113 (163 aa).

Belongs to the YajQ family.

In terms of biological role, nucleotide-binding protein. This Actinobacillus succinogenes (strain ATCC 55618 / DSM 22257 / CCUG 43843 / 130Z) protein is Nucleotide-binding protein Asuc_2113.